Consider the following 257-residue polypeptide: TLC domain-containing protein 3A (257 aa).

The next 7 membrane-spanning stretches (helical) occupy residues 1 to 21, 42 to 62, 71 to 91, 114 to 134, 142 to 162, 181 to 201, and 220 to 240; these read MLLTLASGALFFPGLFALSIW, LVSSVQAVLATWAGLTVIISC, WLATEYVWFLIPYMIYDFYAM, LIENRLMVTHHTVILLFLVPI, LGDFFVGCIFTAELSTPFVSL, GILTVTTFLFCRILLFPFMYW, and LHCNMANAVLISPQLYWFSLL. In terms of domain architecture, TLC spans 33-249; that stretch reads DDCLTVGTRL…LCKKAARLFD (217 aa).

Interacts with GGT7 isoform 3 and SLC3A2.

The protein resides in the cell membrane. The sequence is that of TLC domain-containing protein 3A (Tlcd3a) from Mus musculus (Mouse).